The following is a 336-amino-acid chain: Phenylalanine--tRNA ligase alpha subunit (336 aa).

E259 is a Mg(2+) binding site.

The protein belongs to the class-II aminoacyl-tRNA synthetase family. Phe-tRNA synthetase alpha subunit type 1 subfamily. Tetramer of two alpha and two beta subunits. The cofactor is Mg(2+).

The protein resides in the cytoplasm. It carries out the reaction tRNA(Phe) + L-phenylalanine + ATP = L-phenylalanyl-tRNA(Phe) + AMP + diphosphate + H(+). The chain is Phenylalanine--tRNA ligase alpha subunit from Tropheryma whipplei (strain Twist) (Whipple's bacillus).